A 305-amino-acid polypeptide reads, in one-letter code: MLKQRTIKSIVKTVGIGVHSGRKIELTLRPAAPGTGIVFSRVDLPTPVDIPAAATSIGDTRLASVLQKDGVRVSTVEHLMSACAGLGIDNLYVDVTAEEIPIMDGSAATFVFLIQSAGIEEQNAPKRFVKVKKTVEIRDGDKFARLDPYFGFKLKFSIDFRHPAVDKTGQELEVDFANTSYVREIARARTFGFAHEAEMLREMGLARGGSMENAIVLDEYRILNNDGLRYDDEFVKHKMLDAIGDLYVIGHPLLASYTAYKSGHGLNNALLRELLANEDAYEIVTFDDPQAAPKGFAFDMQTAFA.

Histidine 78, histidine 237, and aspartate 241 together coordinate Zn(2+). Histidine 264 serves as the catalytic Proton donor.

Belongs to the LpxC family. Requires Zn(2+) as cofactor.

The enzyme catalyses a UDP-3-O-[(3R)-3-hydroxyacyl]-N-acetyl-alpha-D-glucosamine + H2O = a UDP-3-O-[(3R)-3-hydroxyacyl]-alpha-D-glucosamine + acetate. It functions in the pathway glycolipid biosynthesis; lipid IV(A) biosynthesis; lipid IV(A) from (3R)-3-hydroxytetradecanoyl-[acyl-carrier-protein] and UDP-N-acetyl-alpha-D-glucosamine: step 2/6. Its function is as follows. Catalyzes the hydrolysis of UDP-3-O-myristoyl-N-acetylglucosamine to form UDP-3-O-myristoylglucosamine and acetate, the committed step in lipid A biosynthesis. In Burkholderia lata (strain ATCC 17760 / DSM 23089 / LMG 22485 / NCIMB 9086 / R18194 / 383), this protein is UDP-3-O-acyl-N-acetylglucosamine deacetylase.